We begin with the raw amino-acid sequence, 88 residues long: UPF0250 protein bbp_432 (88 aa).

It belongs to the UPF0250 family.

The polypeptide is UPF0250 protein bbp_432 (Buchnera aphidicola subsp. Baizongia pistaciae (strain Bp)).